Consider the following 487-residue polypeptide: Putative beta-glucosidase 35 (487 aa).

Residues 1–27 (MGIRMGRRLLLITLLLGALLCNNVAYA) form the signal peptide. Residue Gln-48 coordinates a beta-D-glucoside. Residues Asn-76 and Asn-116 are each glycosylated (N-linked (GlcNAc...) asparagine). A beta-D-glucoside contacts are provided by residues His-151 and 200–201 (NE). The active-site Proton donor is the Glu-201. A disulfide bridge connects residues Cys-220 and Cys-228. Tyr-344 is an a beta-D-glucoside binding site. The N-linked (GlcNAc...) asparagine glycan is linked to Asn-369. Glu-414 serves as a coordination point for a beta-D-glucoside. Glu-414 (nucleophile) is an active-site residue. N-linked (GlcNAc...) asparagine glycosylation is found at Asn-418 and Asn-419. Residue Phe-458 participates in a beta-D-glucoside binding.

It belongs to the glycosyl hydrolase 1 family.

It catalyses the reaction Hydrolysis of terminal, non-reducing beta-D-glucosyl residues with release of beta-D-glucose.. This chain is Putative beta-glucosidase 35 (BGLU35), found in Oryza sativa subsp. japonica (Rice).